The sequence spans 122 residues: Cupin 2 conserved barrel domain-containing protein (122 aa).

A cupin 2 conserved barrel region spans residues 55 to 119 (PGGVTTAEDH…DSPVEIVSIW (65 aa)). Zn(2+) is bound by residues Asp63, His65, Glu69, and His103.

It depends on Zn(2+) as a cofactor.

It carries out the reaction N(6)-hydroxy-L-lysine + L-glutamate + ATP = 1-L-glutamo-2-N(6-)L-lysinohydrazine + AMP + diphosphate + 2 H(+). Its activity is regulated as follows. Inhibited by 1,10-phenanthroline (OP). In terms of biological role, catalyzes hydrazine (N-N) bond formation from an unstable ester intermediate, the product of the ATP-dependent condensation of L-N(6)-OH-lysine and L-glutamine substrates by a methionyl-tRNA synthase-like protein. The chain is Cupin 2 conserved barrel domain-containing protein from Rhodococcus jostii (strain RHA1).